Reading from the N-terminus, the 163-residue chain is NADH-quinone oxidoreductase subunit I (163 aa).

2 4Fe-4S ferredoxin-type domains span residues 53–83 (LRRY…IEAG) and 94–123 (VRYD…EGPN). 8 residues coordinate [4Fe-4S] cluster: C63, C66, C69, C73, C103, C106, C109, and C113.

It belongs to the complex I 23 kDa subunit family. NDH-1 is composed of 14 different subunits. Subunits NuoA, H, J, K, L, M, N constitute the membrane sector of the complex. It depends on [4Fe-4S] cluster as a cofactor.

The protein resides in the cell inner membrane. The catalysed reaction is a quinone + NADH + 5 H(+)(in) = a quinol + NAD(+) + 4 H(+)(out). Functionally, NDH-1 shuttles electrons from NADH, via FMN and iron-sulfur (Fe-S) centers, to quinones in the respiratory chain. The immediate electron acceptor for the enzyme in this species is believed to be ubiquinone. Couples the redox reaction to proton translocation (for every two electrons transferred, four hydrogen ions are translocated across the cytoplasmic membrane), and thus conserves the redox energy in a proton gradient. The sequence is that of NADH-quinone oxidoreductase subunit I from Bartonella quintana (strain Toulouse) (Rochalimaea quintana).